The primary structure comprises 131 residues: UPF0382 inner membrane protein YgdD (131 aa).

The Periplasmic portion of the chain corresponds to 1 to 4 (MTSR). A helical membrane pass occupies residues 5 to 25 (FMLIFAAISGFIFVALGAFGA). The Cytoplasmic segment spans residues 26-64 (HVLSKTMGAVEMGWIQTGLEYQAFHTLAILGLAVAMQRR). The helical transmembrane segment at 65–85 (ISIWFYWSSVFLALGTVLFSG) threads the bilayer. At 86-97 (SLYCLALSHLRL) the chain is on the periplasmic side. A helical membrane pass occupies residues 98-118 (WAFVTPVGGVSFLAGWALMLV). The Cytoplasmic segment spans residues 119-131 (GAIRLKRKGVSHE).

The protein belongs to the UPF0382 family.

The protein localises to the cell inner membrane. The protein is UPF0382 inner membrane protein YgdD (ygdD) of Escherichia coli O157:H7.